Consider the following 1411-residue polypeptide: Protein RhsB (1411 aa).

28 consecutive repeat copies span residues 330–352, 353–374, 375–417, 418–438, 439–460, 461–481, 482–502, 503–525, 526–546, 547–567, 568–588, 589–609, 610–629, 630–650, 651–671, 672–691, 692–711, 712–734, 735–758, 808–828, 829–850, 851–871, 872–894, 895–930, 931–959, 960–984, 985–1019, and 1162–1186. Positions 330–1186 are 28 X approximate tandem repeats; sequence GKQVRSFTYD…LNEENPHQLQ (857 aa).

Belongs to the RHS family.

In terms of biological role, rhs elements have a nonessential function. They may play an important role in the natural ecology of the cell. This is Protein RhsB (rhsB) from Escherichia coli (strain K12).